Here is a 538-residue protein sequence, read N- to C-terminus: Chaperonin GroEL 2 (538 aa).

Residues 29–32 (TLGP), 86–90 (DGTTT), G412, 479–481 (NAA), and D495 contribute to the ATP site.

This sequence belongs to the chaperonin (HSP60) family. In terms of assembly, forms a cylinder of 14 subunits composed of two heptameric rings stacked back-to-back. Interacts with the co-chaperonin GroES.

Its subcellular location is the cytoplasm. The catalysed reaction is ATP + H2O + a folded polypeptide = ADP + phosphate + an unfolded polypeptide.. Functionally, together with its co-chaperonin GroES, plays an essential role in assisting protein folding. The GroEL-GroES system forms a nano-cage that allows encapsulation of the non-native substrate proteins and provides a physical environment optimized to promote and accelerate protein folding. In Renibacterium salmoninarum (strain ATCC 33209 / DSM 20767 / JCM 11484 / NBRC 15589 / NCIMB 2235), this protein is Chaperonin GroEL 2.